The primary structure comprises 167 residues: 3-dehydroquinate dehydratase (167 aa).

Y22 serves as the catalytic Proton acceptor. Positions 76, 82, and 89 each coordinate substrate. H102 serves as the catalytic Proton donor. Substrate contacts are provided by residues 103–104 and R113; that span reads LT.

The protein belongs to the type-II 3-dehydroquinase family. In terms of assembly, homododecamer.

The catalysed reaction is 3-dehydroquinate = 3-dehydroshikimate + H2O. It participates in metabolic intermediate biosynthesis; chorismate biosynthesis; chorismate from D-erythrose 4-phosphate and phosphoenolpyruvate: step 3/7. Its function is as follows. Catalyzes a trans-dehydration via an enolate intermediate. The polypeptide is 3-dehydroquinate dehydratase (Helicobacter pylori (strain P12)).